A 387-amino-acid chain; its full sequence is Postreplication repair E3 ubiquitin-protein ligase rad18 (387 aa).

The RING-type zinc-finger motif lies at 29 to 67; the sequence is CLICHEYFRAPLITSCSHTFCSFCIRDYLREHPMCPACR. The tract at residues 119-153 is disordered; it reads DSASGDEEWEDDLASNSSPASIAKKTSRDSKKRKR. Residues 122 to 131 are compositionally biased toward acidic residues; it reads SGDEEWEDDL. The UBZ4-type zinc finger occupies 156–183; that stretch reads LVHCPACSNLVPHNQINQHLDSCLNSPS. Zn(2+) is bound by residues Cys-159, Cys-162, His-174, and Cys-178. Positions 174-206 are disordered; the sequence is HLDSCLNSPSSPSSSSSPYKNKDNSKSNSLLSF. The segment covering 177–192 has biased composition (low complexity); the sequence is SCLNSPSSPSSSSSPY. Residues 240-274 enclose the SAP domain; it reads YALLSESKIRSKLSEMGLPTDGHKQLLQRRHAKWV. The segment at 335–387 is disordered; sequence KQSTTNKNDSLRNTAVESSTEPSTSNGFPATSVSPPLTIDLTNSQTGSDGPQS.

Belongs to the RAD18 family. In terms of assembly, interacts with E2 ubc2, forming a complex with ubiquitin ligase activity.

Its subcellular location is the nucleus. The enzyme catalyses S-ubiquitinyl-[E2 ubiquitin-conjugating enzyme]-L-cysteine + [acceptor protein]-L-lysine = [E2 ubiquitin-conjugating enzyme]-L-cysteine + N(6)-ubiquitinyl-[acceptor protein]-L-lysine.. The protein operates within protein modification; protein ubiquitination. Its function is as follows. E3 RING-finger protein, member of the UBC2/RAD6 epistasis group. Associates to the E2 ubiquitin conjugating enzyme ubc2/rad6 to form the ubc2-rad18 ubiquitin ligase complex involved in postreplicative repair (PRR) of damaged DNA. The chain is Postreplication repair E3 ubiquitin-protein ligase rad18 (rhp18) from Schizosaccharomyces pombe (strain 972 / ATCC 24843) (Fission yeast).